The following is a 205-amino-acid chain: Tegument protein UL51 homolog (205 aa).

Residue C4 is the site of S-palmitoyl cysteine; by host attachment.

This sequence belongs to the herpesviridae UL51 family. As to quaternary structure, oligomerizes. Interacts with U75; this interaction mediates U75 incorporation to virions. Post-translationally, phosphorylated. In terms of processing, palmitoylation is necessary for Golgi localization.

Its subcellular location is the virion tegument. It localises to the host cytoplasm. It is found in the host Golgi apparatus. Functionally, plays several roles during the time course of infection, including egress of virus particles from the perinuclear space and secondary envelopment of cytoplasmic capsids that bud into specific trans-Golgi network (TGN)-derived membranes. This is Tegument protein UL51 homolog (U44) from Homo sapiens (Human).